The chain runs to 1377 residues: DNA-directed RNA polymerase subunit beta (1377 aa).

Belongs to the RNA polymerase beta chain family. In terms of assembly, the RNAP catalytic core consists of 2 alpha, 1 beta, 1 beta' and 1 omega subunit. When a sigma factor is associated with the core the holoenzyme is formed, which can initiate transcription.

The catalysed reaction is RNA(n) + a ribonucleoside 5'-triphosphate = RNA(n+1) + diphosphate. Its function is as follows. DNA-dependent RNA polymerase catalyzes the transcription of DNA into RNA using the four ribonucleoside triphosphates as substrates. The protein is DNA-directed RNA polymerase subunit beta of Orientia tsutsugamushi (strain Boryong) (Rickettsia tsutsugamushi).